The chain runs to 733 residues: tRNA (guanine(27)-N(2))-dimethyltransferase (733 aa).

Over residues 1-18 the composition is skewed to acidic residues; that stretch reads MENMAEEELLPLEKEEVE. The disordered stretch occupies residues 1 to 78; it reads MENMAEEELL…LASAPEEAKS (78 aa). Thr26 carries the phosphothreonine modification. Composition is skewed to low complexity over residues 39-49 and 57-73; these read PDSALDSAPTP and PALAQAPALSPSLASAP. Ser66 carries the phosphoserine modification. The short motif at 135–139 is the Nucleolar localization signal element; sequence HKLRR. The C2H2-type zinc finger occupies 184 to 206; that stretch reads YHCIICSATITRRTDMLGHVRRH. The Trm1 methyltransferase domain maps to 227–688; sequence EILKEADTDV…APLMQFKSIL (462 aa). The S-adenosyl-L-methionine site is built by Arg260, Asp307, Asp357, and Ala358. Zn(2+) contacts are provided by Cys488, Cys491, Cys513, and Cys515. Residue Lys585 forms a Glycyl lysine isopeptide (Lys-Gly) (interchain with G-Cter in SUMO2) linkage. Ser612 and Ser707 each carry phosphoserine.

This sequence belongs to the class I-like SAM-binding methyltransferase superfamily. Trm1 family. Widely expressed.

The protein localises to the nucleus. The protein resides in the nucleolus. It catalyses the reaction guanosine(27) in tRNA(Tyr) + 2 S-adenosyl-L-methionine = N(2)-dimethylguanosine(27) in tRNA(Tyr) + 2 S-adenosyl-L-homocysteine + 2 H(+). Its function is as follows. Specifically dimethylates a single guanine residue at position 27 of tRNA(Tyr) using S-adenosyl-L-methionine as donor of the methyl groups. Dimethylation at position 27 of tRNA(Tyr) is required for efficient translation of tyrosine codons. Also required to maintain 3-(3-amino-3-carboxypropyl)uridine (acp3U) in the D-loop of several cytoplasmic tRNAs. The polypeptide is tRNA (guanine(27)-N(2))-dimethyltransferase (Homo sapiens (Human)).